Consider the following 113-residue polypeptide: Large ribosomal subunit protein uL22 (113 aa).

Belongs to the universal ribosomal protein uL22 family. Part of the 50S ribosomal subunit.

Its function is as follows. This protein binds specifically to 23S rRNA; its binding is stimulated by other ribosomal proteins, e.g. L4, L17, and L20. It is important during the early stages of 50S assembly. It makes multiple contacts with different domains of the 23S rRNA in the assembled 50S subunit and ribosome. In terms of biological role, the globular domain of the protein is located near the polypeptide exit tunnel on the outside of the subunit, while an extended beta-hairpin is found that lines the wall of the exit tunnel in the center of the 70S ribosome. The polypeptide is Large ribosomal subunit protein uL22 (Herpetosiphon aurantiacus (strain ATCC 23779 / DSM 785 / 114-95)).